The chain runs to 309 residues: Taste receptor type 2 member 64 (309 aa).

At 1-3 the chain is on the extracellular side; that stretch reads MVY. Residues 4–26 form a helical membrane-spanning segment; that stretch reads FLLIILSILVVFAFVLGNFSNGF. Residues 27–46 lie on the Cytoplasmic side of the membrane; sequence VALVNVIDWVKTRKISSADQ. Residues 47-69 traverse the membrane as a helical segment; that stretch reads ILTALVVSRIGLLWVILFHWYAN. Topologically, residues 70 to 83 are extracellular; that stretch reads VFNSALYSSEVGAV. The chain crosses the membrane as a helical span at residues 84 to 106; the sequence is ASNISAIINHFSIWLAASLGIFY. At 107-126 the chain is on the cytoplasmic side; that stretch reads LLKIANFSNLIFLHLKKRIR. The chain crosses the membrane as a helical span at residues 127-149; the sequence is SVVLVILLGPLVFLICNLAVITM. The Extracellular segment spans residues 150–176; it reads DERVWTKEYEGNVTWKIKLRNAIHLSD. A glycan (N-linked (GlcNAc...) asparagine) is linked at N161. The helical transmembrane segment at 177-199 threads the bilayer; sequence LTVSTLANLIPFILTLICFLLLI. At 200–230 the chain is on the cytoplasmic side; the sequence is CSLHKHLKKMQLHGKGSQDLSTKVHIKALQT. Residues 231–253 form a helical membrane-spanning segment; the sequence is VISFLMLYAIYFLYLITLTWNLW. Topologically, residues 254–258 are extracellular; sequence TQQNK. Residues 259 to 281 traverse the membrane as a helical segment; the sequence is LVFLLCQTLGIMYPSFHSFFLIM. Over 282 to 309 the chain is Cytoplasmic; the sequence is GSRKLKQTFLSVLCQVTCLVKGQQPSTP.

It belongs to the G-protein coupled receptor T2R family.

It localises to the membrane. Receptor that may play a role in the perception of bitterness and is gustducin-linked. May play a role in sensing the chemical composition of the gastrointestinal content. The activity of this receptor may stimulate alpha gustducin, mediate PLC-beta-2 activation and lead to the gating of TRPM5. This Pan paniscus (Pygmy chimpanzee) protein is Taste receptor type 2 member 64 (TAS2R64).